The chain runs to 710 residues: MSKQTFTTTFAGNPLVVEVGQVAKQANGATVVRYGESTVLTAAVMSKKMATGDFFPLQVNYEEKMYAAGKFPGGFMKREGRPSTDATLTARLIDRPIRPMFAEGFRNEVQVTNTVLSYDENASAPMAAMFGSSLALSISDIPFNGPIAGVQVGYIDGEFIINPDKEQMEASLLELTVAGSKEAINMVESGAKELSEDIMLEALLKGHQAIQELIAFQEQIVAVVGKEKAEVELLQVDADLQADIVAKYNAQLQKAVQVEEKKAREAATEAVKEMVKAEYEERYAEDENLATIMRDVAEILEQMEHAEVRRLITEDKIRPDGRKIDEIRPLDAVVDFLPKVHGSGLFTRGQTQALSILTLAPMGETQIIDGLAPEYKKRFLHHYNFPQYSVGETGRYGAAGRREIGHGALGERALEQVLPSLEEFPYAIRLVAEVLESNGSSSQASICAGTLALMAGGVPIKAPVAGIAMGLISDGTNYTVLTDIQGLEDHFGDMDFKVAGTREGITALQMDIKIAGITPQILEEALAQAKKARFEILDVIEATIAEPRPELAPTAPKIDTIKIDVDKIKVVIGKGGETIDKIIAETGVKIDIDDEGNVSIYSSDQAAINRTKEIIAGLVREAKVGEVYHAKVVRIEKFGAFVNLFDKTDALVHISEIAWTRTTNVSDVLEVGEDVDVKVIKIDEKGRVDASMKALIPRPPKPEKKEEKHD.

Mg(2+) is bound by residues aspartate 489 and aspartate 495. Residues 556 to 615 (PKIDTIKIDVDKIKVVIGKGGETIDKIIAETGVKIDIDDEGNVSIYSSDQAAINRTKEII) enclose the KH domain. The 69-residue stretch at 625-693 (GEVYHAKVVR…EKGRVDASMK (69 aa)) folds into the S1 motif domain. A disordered region spans residues 691–710 (SMKALIPRPPKPEKKEEKHD). A compositionally biased stretch (basic and acidic residues) spans 700-710 (PKPEKKEEKHD).

Mg(2+) serves as cofactor.

It is found in the cytoplasm. The enzyme catalyses RNA(n+1) + phosphate = RNA(n) + a ribonucleoside 5'-diphosphate. In terms of biological role, involved in mRNA degradation. Catalyzes the phosphorolysis of single-stranded polyribonucleotides processively in the 3'- to 5'-direction. This Streptococcus pyogenes serotype M6 (strain ATCC BAA-946 / MGAS10394) protein is Polyribonucleotide nucleotidyltransferase.